The following is a 284-amino-acid chain: MESLSEVSVQFSQLSMFPFFDMAHYLASVMSAREQAGALDIASHSPMASWFSAMLHCFGGGILSSILLAEPPVGILANTTNIMLASAIWYMVYYFPYDLFYNCFFFLPIRLIAAGMKEVTRTWKILSGITHAHSHYKDAWLVMITIGWARGAGGGLISNFEQLVRGVWKPESNEFLKMSYPVKVTLIGAVLFTLQHGHYLPISRHNLMFIYTMFLVSIKVTMMLTHSAGSPFLPLETPLHRILFGLRQNQAEVRESPSSSGAKGKPSKKTLDKDSGEQSNKKDK.

At 1 to 15 (MESLSEVSVQFSQLS) the chain is on the lumenal side. The helical transmembrane segment at 16–32 (MFPFFDMAHYLASVMSA) threads the bilayer. Residues 33–44 (REQAGALDIASH) lie on the Cytoplasmic side of the membrane. The chain crosses the membrane as a helical span at residues 45 to 68 (SPMASWFSAMLHCFGGGILSSILL). The Lumenal portion of the chain corresponds to 69–79 (AEPPVGILANT). Residues 80–99 (TNIMLASAIWYMVYYFPYDL) form a helical membrane-spanning segment. At 100–102 (FYN) the chain is on the cytoplasmic side. A helical membrane pass occupies residues 103 to 121 (CFFFLPIRLIAAGMKEVTR). A 1,2-diacyl-sn-glycero-3-phospho-(1D-myo-inositol-4,5-bisphosphate) contacts are provided by lysine 117 and arginine 121. Residues 122 to 139 (TWKILSGITHAHSHYKDA) lie on the Lumenal side of the membrane. A helical membrane pass occupies residues 140–157 (WLVMITIGWARGAGGGLI). Over 158-178 (SNFEQLVRGVWKPESNEFLKM) the chain is Cytoplasmic. Residues 179–196 (SYPVKVTLIGAVLFTLQH) form a helical membrane-spanning segment. The Lumenal portion of the chain corresponds to 197–204 (GHYLPISR). Residues 205 to 225 (HNLMFIYTMFLVSIKVTMMLT) form a helical membrane-spanning segment. At 226 to 284 (HSAGSPFLPLETPLHRILFGLRQNQAEVRESPSSSGAKGKPSKKTLDKDSGEQSNKKDK) the chain is on the cytoplasmic side. The interval 250–284 (QAEVRESPSSSGAKGKPSKKTLDKDSGEQSNKKDK) is disordered. Residues 269–284 (KTLDKDSGEQSNKKDK) show a composition bias toward basic and acidic residues.

The protein belongs to the TMEM38 family. Homotrimer; conformation seems to be controled by binding to diacylglycerol (DAG).

Its subcellular location is the endoplasmic reticulum membrane. It carries out the reaction K(+)(in) = K(+)(out). Channel activity is activated by increased cytosolic Ca(2+) levels and blocked by luminal high Ca(2+) levels. Its function is as follows. Intracellular monovalent cation channel required for maintenance of rapid intracellular calcium release. Acts as a potassium counter-ion channel that functions in synchronization with calcium release from intracellular stores. Activated by increased cytosolic Ca(2+) levels. This Xenopus laevis (African clawed frog) protein is Trimeric intracellular cation channel type B-B (tmem38b-b).